The sequence spans 372 residues: O-glycoside alpha-1,2-mannosyltransferase homolog 2 (372 aa).

Topologically, residues 1-6 are cytoplasmic; that stretch reads MRISRL. Residues 7 to 27 form a helical; Signal-anchor for type II membrane protein membrane-spanning segment; that stretch reads LIRVLLGFVILFITYILFPSI. The Lumenal segment spans residues 28-372; it reads PKALVNTLNV…NLTNEDYDEL (345 aa). Glu271 acts as the Nucleophile in catalysis.

It belongs to the glycosyltransferase 15 family.

Its subcellular location is the endoplasmic reticulum membrane. In terms of biological role, probable mannosyltransferase involved in O-glycosylation of cell wall and secreted proteins. This chain is O-glycoside alpha-1,2-mannosyltransferase homolog 2 (omh2), found in Schizosaccharomyces pombe (strain 972 / ATCC 24843) (Fission yeast).